Reading from the N-terminus, the 364-residue chain is Chorismate synthase (364 aa).

The tract at residues 41-60 is disordered; that stretch reads MQHDLDRRRPGTSRYTTARR. NADP(+)-binding residues include Arg48 and Arg54. FMN is bound by residues 125-127, 238-239, Gly278, 293-297, and Arg319; these read RSS, NA, and KPTSS.

Belongs to the chorismate synthase family. As to quaternary structure, homotetramer. Requires FMNH2 as cofactor.

The enzyme catalyses 5-O-(1-carboxyvinyl)-3-phosphoshikimate = chorismate + phosphate. It participates in metabolic intermediate biosynthesis; chorismate biosynthesis; chorismate from D-erythrose 4-phosphate and phosphoenolpyruvate: step 7/7. Catalyzes the anti-1,4-elimination of the C-3 phosphate and the C-6 proR hydrogen from 5-enolpyruvylshikimate-3-phosphate (EPSP) to yield chorismate, which is the branch point compound that serves as the starting substrate for the three terminal pathways of aromatic amino acid biosynthesis. This reaction introduces a second double bond into the aromatic ring system. This Shewanella putrefaciens (strain CN-32 / ATCC BAA-453) protein is Chorismate synthase.